The following is a 134-amino-acid chain: Methylglyoxal synthase (134 aa).

Residues 1-134 (MHIALIAHDE…DWRDLRRNDE (134 aa)) enclose the MGS-like domain. Substrate contacts are provided by residues His-8, Lys-12, 34–37 (TGTT), and 54–55 (SG). Asp-60 (proton donor/acceptor) is an active-site residue. His-87 serves as a coordination point for substrate.

Belongs to the methylglyoxal synthase family.

It carries out the reaction dihydroxyacetone phosphate = methylglyoxal + phosphate. In terms of biological role, catalyzes the formation of methylglyoxal from dihydroxyacetone phosphate. The chain is Methylglyoxal synthase from Listeria monocytogenes serotype 4b (strain CLIP80459).